A 316-amino-acid polypeptide reads, in one-letter code: 4-hydroxy-3-methylbut-2-enyl diphosphate reductase (316 aa).

Cys17 contacts [4Fe-4S] cluster. The (2E)-4-hydroxy-3-methylbut-2-enyl diphosphate site is built by His46 and His79. Dimethylallyl diphosphate-binding residues include His46 and His79. Isopentenyl diphosphate contacts are provided by His46 and His79. Residue Cys101 participates in [4Fe-4S] cluster binding. His129 lines the (2E)-4-hydroxy-3-methylbut-2-enyl diphosphate pocket. Position 129 (His129) interacts with dimethylallyl diphosphate. His129 serves as a coordination point for isopentenyl diphosphate. The active-site Proton donor is Glu131. (2E)-4-hydroxy-3-methylbut-2-enyl diphosphate is bound at residue Thr170. Position 200 (Cys200) interacts with [4Fe-4S] cluster. Ser228, Ser229, Asn230, and Ser273 together coordinate (2E)-4-hydroxy-3-methylbut-2-enyl diphosphate. Ser228, Ser229, Asn230, and Ser273 together coordinate dimethylallyl diphosphate. Isopentenyl diphosphate is bound by residues Ser228, Ser229, Asn230, and Ser273.

Belongs to the IspH family. It depends on [4Fe-4S] cluster as a cofactor.

It catalyses the reaction isopentenyl diphosphate + 2 oxidized [2Fe-2S]-[ferredoxin] + H2O = (2E)-4-hydroxy-3-methylbut-2-enyl diphosphate + 2 reduced [2Fe-2S]-[ferredoxin] + 2 H(+). The enzyme catalyses dimethylallyl diphosphate + 2 oxidized [2Fe-2S]-[ferredoxin] + H2O = (2E)-4-hydroxy-3-methylbut-2-enyl diphosphate + 2 reduced [2Fe-2S]-[ferredoxin] + 2 H(+). The protein operates within isoprenoid biosynthesis; dimethylallyl diphosphate biosynthesis; dimethylallyl diphosphate from (2E)-4-hydroxy-3-methylbutenyl diphosphate: step 1/1. Its pathway is isoprenoid biosynthesis; isopentenyl diphosphate biosynthesis via DXP pathway; isopentenyl diphosphate from 1-deoxy-D-xylulose 5-phosphate: step 6/6. In terms of biological role, catalyzes the conversion of 1-hydroxy-2-methyl-2-(E)-butenyl 4-diphosphate (HMBPP) into a mixture of isopentenyl diphosphate (IPP) and dimethylallyl diphosphate (DMAPP). Acts in the terminal step of the DOXP/MEP pathway for isoprenoid precursor biosynthesis. In Roseobacter denitrificans (strain ATCC 33942 / OCh 114) (Erythrobacter sp. (strain OCh 114)), this protein is 4-hydroxy-3-methylbut-2-enyl diphosphate reductase.